Here is a 219-residue protein sequence, read N- to C-terminus: Endonuclease III (219 aa).

Residues 117–136 (MEELLTLPGVARKTANVVLA) enclose the HhH domain. [4Fe-4S] cluster is bound by residues Cys-197, Cys-204, Cys-207, and Cys-213.

Belongs to the Nth/MutY family. [4Fe-4S] cluster serves as cofactor.

It catalyses the reaction 2'-deoxyribonucleotide-(2'-deoxyribose 5'-phosphate)-2'-deoxyribonucleotide-DNA = a 3'-end 2'-deoxyribonucleotide-(2,3-dehydro-2,3-deoxyribose 5'-phosphate)-DNA + a 5'-end 5'-phospho-2'-deoxyribonucleoside-DNA + H(+). In terms of biological role, DNA repair enzyme that has both DNA N-glycosylase activity and AP-lyase activity. The DNA N-glycosylase activity releases various damaged pyrimidines from DNA by cleaving the N-glycosidic bond, leaving an AP (apurinic/apyrimidinic) site. The AP-lyase activity cleaves the phosphodiester bond 3' to the AP site by a beta-elimination, leaving a 3'-terminal unsaturated sugar and a product with a terminal 5'-phosphate. In Synechocystis sp. (strain ATCC 27184 / PCC 6803 / Kazusa), this protein is Endonuclease III.